The chain runs to 426 residues: Serine--tRNA ligase (426 aa).

232–234 (TAE) is a binding site for L-serine. Residue 263–265 (RRE) coordinates ATP. An L-serine-binding site is contributed by glutamate 286. An ATP-binding site is contributed by 350-353 (EISS). Residue serine 385 coordinates L-serine.

This sequence belongs to the class-II aminoacyl-tRNA synthetase family. Type-1 seryl-tRNA synthetase subfamily. In terms of assembly, homodimer. The tRNA molecule binds across the dimer.

The protein resides in the cytoplasm. It carries out the reaction tRNA(Ser) + L-serine + ATP = L-seryl-tRNA(Ser) + AMP + diphosphate + H(+). The enzyme catalyses tRNA(Sec) + L-serine + ATP = L-seryl-tRNA(Sec) + AMP + diphosphate + H(+). Its pathway is aminoacyl-tRNA biosynthesis; selenocysteinyl-tRNA(Sec) biosynthesis; L-seryl-tRNA(Sec) from L-serine and tRNA(Sec): step 1/1. Functionally, catalyzes the attachment of serine to tRNA(Ser). Is also able to aminoacylate tRNA(Sec) with serine, to form the misacylated tRNA L-seryl-tRNA(Sec), which will be further converted into selenocysteinyl-tRNA(Sec). The sequence is that of Serine--tRNA ligase from Fervidobacterium nodosum (strain ATCC 35602 / DSM 5306 / Rt17-B1).